The primary structure comprises 334 residues: Tyrosine-protein kinase SRK3 (334 aa).

Residues 1-42 (IRTLDDGGFYMANRISFPTLQNLVSHYMMDADGLAQRLSRPC) enclose the SH2 domain. Residues 66-321 (IQLQRKLGQG…LKNLLEDYYV (256 aa)) form the Protein kinase domain. ATP contacts are provided by residues 72–80 (LGQGNFGEV) and Lys-94. Catalysis depends on Asp-186, which acts as the Proton acceptor.

This sequence belongs to the protein kinase superfamily. Tyr protein kinase family.

It localises to the cytoplasm. The catalysed reaction is L-tyrosyl-[protein] + ATP = O-phospho-L-tyrosyl-[protein] + ADP + H(+). In Spongilla lacustris (Freshwater sponge), this protein is Tyrosine-protein kinase SRK3 (SRK3).